A 132-amino-acid polypeptide reads, in one-letter code: D-ribose pyranase (132 aa).

Catalysis depends on His20, which acts as the Proton donor. Substrate contacts are provided by residues Asp28, His99, and 121–123; that span reads YSN.

Belongs to the RbsD / FucU family. RbsD subfamily. In terms of assembly, homodecamer.

The protein resides in the cytoplasm. It carries out the reaction beta-D-ribopyranose = beta-D-ribofuranose. It functions in the pathway carbohydrate metabolism; D-ribose degradation; D-ribose 5-phosphate from beta-D-ribopyranose: step 1/2. Functionally, catalyzes the interconversion of beta-pyran and beta-furan forms of D-ribose. This is D-ribose pyranase from Streptococcus agalactiae serotype Ia (strain ATCC 27591 / A909 / CDC SS700).